Consider the following 345-residue polypeptide: S-adenosylmethionine:tRNA ribosyltransferase-isomerase (345 aa).

The protein belongs to the QueA family. Monomer.

It is found in the cytoplasm. It catalyses the reaction 7-aminomethyl-7-carbaguanosine(34) in tRNA + S-adenosyl-L-methionine = epoxyqueuosine(34) in tRNA + adenine + L-methionine + 2 H(+). Its pathway is tRNA modification; tRNA-queuosine biosynthesis. Functionally, transfers and isomerizes the ribose moiety from AdoMet to the 7-aminomethyl group of 7-deazaguanine (preQ1-tRNA) to give epoxyqueuosine (oQ-tRNA). The sequence is that of S-adenosylmethionine:tRNA ribosyltransferase-isomerase from Shewanella sp. (strain MR-4).